A 219-amino-acid chain; its full sequence is Small ribosomal subunit protein uS3 (219 aa).

A KH type-2 domain is found at 38–106; it reads IRKYINTKLA…KVHINIVEIK (69 aa).

It belongs to the universal ribosomal protein uS3 family. In terms of assembly, part of the 30S ribosomal subunit. Forms a tight complex with proteins S10 and S14.

In terms of biological role, binds the lower part of the 30S subunit head. Binds mRNA in the 70S ribosome, positioning it for translation. This is Small ribosomal subunit protein uS3 from Latilactobacillus sakei subsp. sakei (strain 23K) (Lactobacillus sakei subsp. sakei).